Here is a 990-residue protein sequence, read N- to C-terminus: MKENNLNRVIGWSGLLLTSLLSTSALADNIGTSAEELGLSDYRHFVIYPRLDKALKAQKNNDEATAIREFEYIHQQVPDNIPLTLYLAEAYRHFGHDDRARLLLEDQLKRHPGDARLERSLAAIPVEVKSVTTVEELLAQQKACDAAPTLRCRSEVGQNALRLAQLPVARAQLNDATFAASPEGKTLRTDLLQRAIYLKQWSQADTLYNEARQQNTLSAAERRQWFDVLLAGQLDDRILALQSQGIFTDPQSYITYATALAYRGEKARLQHYLIENKPLFTTDAQEKSWLYLLSKYSANPVQALANYTVQFADNRQYVVGATLPVLLKEGQYDAAQKLLATLPANEMLEERYAVSVATRNKAEALRLARLLYQQEPANLTRLDQLTWQLMQNEQSREAADLLLQRYPFQGDARVSQTLMARLASLLESHPYLATPAKVAILSKPLPLAEQRQWQSQLPGIADNCPAIVRLLGDMSPSYDAAAWNRLAKCYRDTLPGVALYAWLQAEQRQPSAWQHRAVAYQAYQVEDYATALAAWQKISLHDMSNEDLLAAANTAQAAGNGAARDRWLQQAEKRGLGSNALYWWLHAQRYIPGQPELALNDLTRSINIAPSANAYVARATIYRQRHNVPAAVSDLRAALELEPNNSNTQAALGYALWDSGDIAQSREMLEPAHKGLPDDPALIRQLAYVNQRLDDMPATQHYARLVIDDIDNQALITPLTPEQNQQRFNFRRLHEEVGRRWTFSFDSSIGLRSGAMSTANNNVGGAAPGKSYRSYGQLEAEYRIGRNMLLEGDLLSVYSRVFADTGENGVMMPVKNPMSGTGLRWKPLRDQIFFIAVEQQLPLNGQNGASDTMLRASASFFNGGKYSDEWHPNGSGWFAQNLYLDAAQYIRQDIQAWTADYRVSWHQKVANGQTIEPYAHVQDNGYRDKGTQGAQLGGVGVRWNIWTGETHYDAWPHKVSLGVEYQHTFKAINQRNGERNNAFLTIGVHW.

A signal peptide spans 1–27 (MKENNLNRVIGWSGLLLTSLLSTSALA). TPR repeat units lie at residues 81-114 (IPLTLYLAEAYRHFGHDDRARLLLEDQLKRHPGD), 612-645 (ANAYVARATIYRQRHNVPAAVSDLRAALELEPNN), and 646-679 (SNTQAALGYALWDSGDIAQSREMLEPAHKGLPDD).

In terms of assembly, (Microbial infection) Interacts with N4 phage non-contractile sheath protein; this interaction is essential for viral adsorption to the host.

The protein resides in the cell outer membrane. Functionally, (Microbial infection) Allows N4 phage attachment by binding to the viral non-contractile sheath protein. The polypeptide is Bacteriophage adsorption protein A (nfrA) (Escherichia coli (strain K12)).